We begin with the raw amino-acid sequence, 412 residues long: Multifunctional CCA protein (412 aa).

2 residues coordinate ATP: Gly-8 and Arg-11. Positions 8 and 11 each coordinate CTP. Mg(2+) contacts are provided by Asp-21 and Asp-23. ATP-binding residues include Arg-91, Arg-137, and Arg-140. CTP contacts are provided by Arg-91, Arg-137, and Arg-140. The HD domain occupies 228-329 (TGIHTMMVLE…VKLFDKADFW (102 aa)).

The protein belongs to the tRNA nucleotidyltransferase/poly(A) polymerase family. Bacterial CCA-adding enzyme type 1 subfamily. As to quaternary structure, monomer. Can also form homodimers and oligomers. It depends on Mg(2+) as a cofactor. Requires Ni(2+) as cofactor.

It catalyses the reaction a tRNA precursor + 2 CTP + ATP = a tRNA with a 3' CCA end + 3 diphosphate. The enzyme catalyses a tRNA with a 3' CCA end + 2 CTP + ATP = a tRNA with a 3' CCACCA end + 3 diphosphate. In terms of biological role, catalyzes the addition and repair of the essential 3'-terminal CCA sequence in tRNAs without using a nucleic acid template. Adds these three nucleotides in the order of C, C, and A to the tRNA nucleotide-73, using CTP and ATP as substrates and producing inorganic pyrophosphate. tRNA 3'-terminal CCA addition is required both for tRNA processing and repair. Also involved in tRNA surveillance by mediating tandem CCA addition to generate a CCACCA at the 3' terminus of unstable tRNAs. While stable tRNAs receive only 3'-terminal CCA, unstable tRNAs are marked with CCACCA and rapidly degraded. This Shewanella pealeana (strain ATCC 700345 / ANG-SQ1) protein is Multifunctional CCA protein.